The sequence spans 461 residues: Metacaspase-1 (461 aa).

Composition is skewed to gly residues over residues 1 to 21 (MSYPGQGGNTYGGGPPGGYGG), 45 to 66 (QYGGGYGGPGGGYGGSGGGYGP), 74 to 86 (QYGGSGGPGGYGP), and 105 to 119 (PGGQGGGGGGYGHPG). Residues 1-154 (MSYPGQGGNT…PQGNQAFGGT (154 aa)) are disordered. 2 stretches are compositionally biased toward low complexity: residues 121 to 131 (GNQAPPGQYGQ) and 138 to 148 (HGNHNMPPQGN). Catalysis depends on residues histidine 252 and cysteine 308.

The protein belongs to the peptidase C14B family.

Involved in cell death (apoptosis). This is Metacaspase-1 (MCA1) from Yarrowia lipolytica (strain CLIB 122 / E 150) (Yeast).